The following is a 1323-amino-acid chain: PH domain leucine-rich repeat-containing protein phosphatase 2 (1323 aa).

A PH domain is found at 150 to 248 (RILLSGIYNV…WQRQASKVVS (99 aa)). 22 LRR repeats span residues 250–271 (RISTVDLSCYSLEEVPEHLFYS), 273–296 (DITYLNLRHNFMQLERPGGLDTLY), 300–321 (QLKGLNLSHNKLGLFPILLCEI), 323–344 (TLTELNLSCNGFHDLPSQIGNL), 346–368 (NLQTLCLDGNFLTTLPEELGNLQ), 369–390 (QLSSLGISFNNFSQIPEVYEKL), 392–412 (MLDRVVMAGNCLEVLNLGVLN), 416–439 (HIKHVDLRMNHLKTMVIENLEGNK), 440–460 (HITHVDLRDNRLTDLDLSSLC), 461–480 (SLEQLHCGRNQLRELTLSGF), 481–502 (SLRTLYASSNRLTAVNVYPVPS), 503–524 (LLTFLDLSRNLLECVPDWACEA), 526–547 (KIEVLDVSYNLLTEVPVRILSS), 549–570 (SLRKLMLGHNHVQNLPTLVEHI), 571–592 (PLEVLDLQHNALTRLPDTLFSK), 595–616 (NLRYLNASANSLESLPSACTGE), 621–644 (MLQLLYLTNNLLTDQCIPVLVGHL), 645–666 (HLRILHLANNQLQTFPASKLNK), 669–690 (QLEELNLSGNKLKTIPTTIANC), 692–713 (RLHTLVAHSNNISIFPEILQLP), 714–735 (QIQFVDLSCNDLTEILIPEALP), and 737–758 (TLQDLDLTGNTNLVLEHKTLDI). In terms of domain architecture, PPM-type phosphatase spans 785–1033 (SHGLAEMAGQ…DNVGAMVVYL (249 aa)). Aspartate 820, glycine 821, lysine 985, and aspartate 1024 together coordinate Mn(2+). The segment at 1060–1157 (TIKDAPKPAT…DSDDDQPVEG (98 aa)) is disordered. A compositionally biased stretch (low complexity) spans 1071–1097 (SSSSGIASEFSSEMSTSEVSSEVGSTA). Polar residues predominate over residues 1122 to 1146 (PTPTSGLFQRQPSSATFSSNQSDNG). At serine 1210 the chain carries Phosphoserine. Residues 1285–1323 (HDLEEEVKEQMKQHQDSRLEPEPHEEDRTEPPEEFDTAL) form a disordered region. The segment covering 1292–1315 (KEQMKQHQDSRLEPEPHEEDRTEP) has biased composition (basic and acidic residues).

As to quaternary structure, interacts with AKT1, AKT3 and PRKCB isoform beta-II. Interacts with STK4, RPS6KB1, RAF1. Interacts with FKBP5; FKBP5 acts as a scaffold for PHLPP2 and Akt. Interacts with NHERF1; NHERF1 scaffolds a heterotrimeric complex with PTEN. The cofactor is Mn(2+). In colorectal cancer tissue, expression is highest in the surface epithelium of normal colonic mucosa adjacent to the cancer tissue but is largely excluded from the crypt bases. Expression is lost or significantly decreased in 80% of tested tumors (at protein level).

The protein localises to the cytoplasm. It localises to the membrane. Its subcellular location is the nucleus. It carries out the reaction O-phospho-L-seryl-[protein] + H2O = L-seryl-[protein] + phosphate. The catalysed reaction is O-phospho-L-threonyl-[protein] + H2O = L-threonyl-[protein] + phosphate. Inhibited by AKT1, AKT2 and AKT3. Activated by oleic acid and arachidonic acid. In terms of biological role, protein phosphatase involved in regulation of Akt and PKC signaling. Mediates dephosphorylation in the C-terminal domain hydrophobic motif of members of the AGC Ser/Thr protein kinase family; specifically acts on 'Ser-473' of AKT1, 'Ser-660' of PRKCB isoform beta-II and 'Ser-657' of PRKCA. Akt regulates the balance between cell survival and apoptosis through a cascade that primarily alters the function of transcription factors that regulate pro- and antiapoptotic genes. Dephosphorylation of 'Ser-473' of Akt triggers apoptosis and decreases cell proliferation. Also controls the phosphorylation of AKT3. Dephosphorylates STK4 on 'Thr-387' leading to STK4 activation and apoptosis. Dephosphorylates RPS6KB1 and is involved in regulation of cap-dependent translation. Inhibits cancer cell proliferation and may act as a tumor suppressor. Dephosphorylation of PRKCA and PRKCB leads to their destabilization and degradation. Dephosphorylates RAF1 inhibiting its kinase activity. In Homo sapiens (Human), this protein is PH domain leucine-rich repeat-containing protein phosphatase 2 (PHLPP2).